The primary structure comprises 578 residues: Synaptic defective enhancer 1 (578 aa).

Disordered regions lie at residues 1-62, 173-216, 426-457, and 474-578; these read MGEP…RKET, SEQA…SMDQ, PPLPPPQAPFSGDCWRAQPAAPVPASVPVSSA, and LGLH…FSNF. A compositionally biased stretch (low complexity) spans 444–455; sequence PAAPVPASVPVS. Composition is skewed to pro residues over residues 481 to 491 and 500 to 542; these read PPPPPPPPPPT and IPPP…PNPN. Positions 565 to 578 are enriched in low complexity; that stretch reads NQFPPQQQQSFSNF.

May interact (via C-terminus) with ssup-72; the interaction may prevent ssup-72 binding to RNA polymerase II subunit ama-1. Expressed in germline, oocytes, epidermis, pharyngeal bulb and neurons.

Its subcellular location is the nucleus. It is found in the nucleus speckle. In terms of biological role, acts as a negative regulator of nuclear pre-mRNA 3'-end processing (mRNA polyadenylation). Plays a role in tissue-specific expression of protein isoforms by regulating differential processing of pre-mRNA 3'-end (alternative polyadenylation). In neurons, regulates alternative polyadenylation of specific mRNAs including unc-44 and dlk-1 by interacting with phosphatase ssup-72 and thus preventing ssup-72 dephosphorylation of RNA polymerase II subunit ama-1. Specifically, alters the usage of internal polyadenylation sites (PAS) to promote the production of neuron-specific unc-44 isoform and dlk-1 isoform c, both required for normal synapse and axon development. Conversely, in the epidermis, by inhibiting ssup-72 function, promotes the usage of an internal PAS preventing the production of one of unc-44 isoforms. In neurons, also negatively regulates protein levels of pre-RNA processing protein psf-2. This is Synaptic defective enhancer 1 from Caenorhabditis elegans.